We begin with the raw amino-acid sequence, 529 residues long: Calcium-dependent protein kinase 3 (529 aa).

The interval 1 to 73 (MGHRHSKSKS…GRILGRPMEE (73 aa)) is disordered. Gly-2 is lipidated: N-myristoyl glycine. Residues 39 to 53 (SGSGTVGSSGSGTGG) show a composition bias toward gly residues. The Protein kinase domain maps to 78–336 (YEFGRELGRG…AAEVLNHPWI (259 aa)). Residues 84 to 92 (LGRGQFGVT) and Lys-107 each bind ATP. Residue Asp-202 is the Proton acceptor of the active site. Residue Ser-242 is modified to Phosphoserine. An autoinhibitory domain region spans residues 342-372 (ASDKPLDNAVLSRMKQFRAMNKLKKMALKVI). 4 EF-hand domains span residues 379–414 (EEII…LGSK), 415–450 (ISEA…MNRI), 451–485 (ERED…KYNM), and 486–521 (GDDK…GNPE). Asp-392, Asp-394, Asn-396, Glu-403, Asp-428, Asp-430, Asp-432, Ser-434, Glu-439, Asp-464, Asp-466, Ser-468, Tyr-470, Glu-475, Asp-499, Asp-501, Asp-503, Lys-505, and Glu-510 together coordinate Ca(2+).

The protein belongs to the protein kinase superfamily. Ser/Thr protein kinase family. CDPK subfamily. Interacts with GHR1. In terms of tissue distribution, expressed in both guard cells and mesophyll cells.

It localises to the cytoplasm. Its subcellular location is the nucleus. It carries out the reaction L-seryl-[protein] + ATP = O-phospho-L-seryl-[protein] + ADP + H(+). The enzyme catalyses L-threonyl-[protein] + ATP = O-phospho-L-threonyl-[protein] + ADP + H(+). Its activity is regulated as follows. Activated by calcium. Autophosphorylation may play an important role in the regulation of the kinase activity. Its function is as follows. May play a role in signal transduction pathways that involve calcium as a second messenger. Functions in abscisic acid (ABA) regulation of guard cell S-type anion- and Ca(2+)-permeable channels and stomatal closure. This Arabidopsis thaliana (Mouse-ear cress) protein is Calcium-dependent protein kinase 3.